Consider the following 141-residue polypeptide: Phosphoribosyl-AMP cyclohydrolase (141 aa).

A Mg(2+)-binding site is contributed by aspartate 88. Cysteine 89 is a Zn(2+) binding site. Aspartate 90 and aspartate 92 together coordinate Mg(2+). Zn(2+) contacts are provided by cysteine 109 and cysteine 116.

This sequence belongs to the PRA-CH family. Homodimer. Requires Mg(2+) as cofactor. It depends on Zn(2+) as a cofactor.

It is found in the cytoplasm. The enzyme catalyses 1-(5-phospho-beta-D-ribosyl)-5'-AMP + H2O = 1-(5-phospho-beta-D-ribosyl)-5-[(5-phospho-beta-D-ribosylamino)methylideneamino]imidazole-4-carboxamide. It functions in the pathway amino-acid biosynthesis; L-histidine biosynthesis; L-histidine from 5-phospho-alpha-D-ribose 1-diphosphate: step 3/9. Functionally, catalyzes the hydrolysis of the adenine ring of phosphoribosyl-AMP. This chain is Phosphoribosyl-AMP cyclohydrolase, found in Paracidovorax citrulli (strain AAC00-1) (Acidovorax citrulli).